The chain runs to 333 residues: D-fructose 1,6-bisphosphatase class 2/sedoheptulose 1,7-bisphosphatase (333 aa).

Residues Asp33, Glu57, Asp85, and Glu88 each contribute to the Mn(2+) site. Substrate is bound by residues 88-90 (EGT), Tyr119, 164-166 (RTR), and 186-188 (DGD). Residue Glu213 participates in Mn(2+) binding.

This sequence belongs to the FBPase class 2 family. In terms of assembly, homotetramer. Mn(2+) is required as a cofactor.

It catalyses the reaction beta-D-fructose 1,6-bisphosphate + H2O = beta-D-fructose 6-phosphate + phosphate. The catalysed reaction is D-sedoheptulose 1,7-bisphosphate + H2O = D-sedoheptulose 7-phosphate + phosphate. It functions in the pathway carbohydrate biosynthesis; Calvin cycle. Catalyzes the hydrolysis of fructose 1,6-bisphosphate (Fru 1,6-P2) and sedoheptulose 1,7-bisphosphate (Sed 1,7-P2) to fructose 6-phosphate and sedoheptulose 7-phosphate, respectively. This is D-fructose 1,6-bisphosphatase class 2/sedoheptulose 1,7-bisphosphatase from Prochlorococcus marinus (strain MIT 9301).